The primary structure comprises 147 residues: Protein MioC (147 aa).

The region spanning 4-143 (ITLISGSTLG…PAEEWLGSWV (140 aa)) is the Flavodoxin-like domain.

The protein belongs to the flavodoxin family. MioC subfamily. As to quaternary structure, homodimer. It depends on FMN as a cofactor.

Functionally, probable electron transporter required for biotin synthase activity. In Escherichia coli (strain K12), this protein is Protein MioC (mioC).